The chain runs to 294 residues: Small ribosomal subunit protein uS2 (294 aa).

Belongs to the universal ribosomal protein uS2 family.

The protein is Small ribosomal subunit protein uS2 (rpsB) of Mycoplasma pneumoniae (strain ATCC 29342 / M129 / Subtype 1) (Mycoplasmoides pneumoniae).